Reading from the N-terminus, the 305-residue chain is Oxygen-dependent coproporphyrinogen-III oxidase (305 aa).

Position 93 (Ser-93) interacts with substrate. Residues His-97 and His-107 each contribute to the a divalent metal cation site. His-107 functions as the Proton donor in the catalytic mechanism. 109 to 111 (NVR) is a binding site for substrate. 2 residues coordinate a divalent metal cation: His-146 and His-176. The interval 241 to 276 (YVEFNLVFDRGTLFGLQSGGRTESILMSLPPQVRWG) is important for dimerization. 259–261 (GGR) contacts substrate.

It belongs to the aerobic coproporphyrinogen-III oxidase family. Homodimer. A divalent metal cation is required as a cofactor.

The protein localises to the cytoplasm. The catalysed reaction is coproporphyrinogen III + O2 + 2 H(+) = protoporphyrinogen IX + 2 CO2 + 2 H2O. The protein operates within porphyrin-containing compound metabolism; protoporphyrin-IX biosynthesis; protoporphyrinogen-IX from coproporphyrinogen-III (O2 route): step 1/1. Functionally, involved in the heme biosynthesis. Catalyzes the aerobic oxidative decarboxylation of propionate groups of rings A and B of coproporphyrinogen-III to yield the vinyl groups in protoporphyrinogen-IX. The chain is Oxygen-dependent coproporphyrinogen-III oxidase from Pseudomonas aeruginosa (strain UCBPP-PA14).